A 1427-amino-acid chain; its full sequence is DNA-directed RNA polymerase subunit beta' (1427 aa).

Zn(2+)-binding residues include cysteine 66, cysteine 68, cysteine 81, and cysteine 84. Residues aspartate 472, aspartate 474, and aspartate 476 each contribute to the Mg(2+) site. Zn(2+) is bound by residues cysteine 815, cysteine 889, cysteine 896, and cysteine 899.

This sequence belongs to the RNA polymerase beta' chain family. In terms of assembly, the RNAP catalytic core consists of 2 alpha, 1 beta, 1 beta' and 1 omega subunit. When a sigma factor is associated with the core the holoenzyme is formed, which can initiate transcription. Mg(2+) is required as a cofactor. It depends on Zn(2+) as a cofactor.

The enzyme catalyses RNA(n) + a ribonucleoside 5'-triphosphate = RNA(n+1) + diphosphate. Its function is as follows. DNA-dependent RNA polymerase catalyzes the transcription of DNA into RNA using the four ribonucleoside triphosphates as substrates. The sequence is that of DNA-directed RNA polymerase subunit beta' from Bacteroides fragilis (strain YCH46).